Reading from the N-terminus, the 510-residue chain is MAGSRQRGLRARVRPLFCALLLSLGRFVRGDGVGGDPAVALPHRRFEYKYSFKGPHLVQSDGTVPFWAHAGNAIPSSDQIRVAPSLKSQRGSVWTKTKAAFENWEVEVTFRVTGRGRIGADGLAIWYAENQGLEGPVFGSADLWNGVGIFFDSFDNDGKKNNPAIVIIGNNGQIHYDHQNDGASQALASCQRDFRNKPYPVRAKITYYQNTLTVMINNGFTPDKNDYEFCAKVENMIIPAQGHFGISAATGGLADDHDVLSFLTFQLTEPGKEPPTPDKEISEKEKEKYQEEFEHFQQELDKKKEEFQKGHPDLQGQPAEEIFESVGDRELRQVFEGQNRIHLEIKQLNRQLDMILDEQRRYVSSLTEEISKRGAGMPGQHGQITQQELDTVVKTQHEILRQVNEMKNSMSETVRLVSGMQHPGSAGGVYETTQHFIDIKEHLHIVKRDIDNLVQRNMPSNEKPKCPELPPFPSCLSTVHFIIFVVVQTVLFIGYIMYRSQQEAAAKKFF.

Residues 1 to 30 form the signal peptide; sequence MAGSRQRGLRARVRPLFCALLLSLGRFVRG. Residues 31-477 are Lumenal-facing; that stretch reads DGVGGDPAVA…ELPPFPSCLS (447 aa). Positions 44 to 267 constitute an L-type lectin-like domain; sequence RRFEYKYSFK…DVLSFLTFQL (224 aa). A carbohydrate is bound by residues S88 and D121. Ca(2+)-binding residues include D152, F154, and N156. A carbohydrate is bound by residues N156 and H178. Residue D181 participates in Ca(2+) binding. C190 and C230 are disulfide-bonded. 251-253 lines the a carbohydrate pocket; sequence GGL. The residue at position 425 (S425) is a Phosphoserine. The chain crosses the membrane as a helical span at residues 478 to 498; the sequence is TVHFIIFVVVQTVLFIGYIMY. Over 499-510 the chain is Cytoplasmic; the sequence is RSQQEAAAKKFF. The mediates interaction with RAB3GAP1, RAB3GAP2 and UBXN6 stretch occupies residues 499-510; the sequence is RSQQEAAAKKFF. Positions 509–510 match the ER export motif motif; the sequence is FF.

As to quaternary structure, exists both as a covalent disulfide-linked homohexamer, and a complex of three disulfide-linked dimers non-covalently kept together. Interacts with MCFD2. May interact with TMEM115. Interacts with RAB3GAP1 and RAB3GAP2. Interacts with UBXN6. Interacts with SERPINA1/alpha1-antitrypsin. Interacts with BET1. The N-terminal may be partly blocked. Ubiquitous.

The protein localises to the endoplasmic reticulum-Golgi intermediate compartment membrane. The protein resides in the golgi apparatus membrane. It localises to the endoplasmic reticulum membrane. Mannose-specific lectin. May recognize sugar residues of glycoproteins, glycolipids, or glycosylphosphatidyl inositol anchors and may be involved in the sorting or recycling of proteins, lipids, or both. The LMAN1-MCFD2 complex forms a specific cargo receptor for the ER-to-Golgi transport of selected proteins. This chain is Protein ERGIC-53 (LMAN1), found in Homo sapiens (Human).